A 539-amino-acid polypeptide reads, in one-letter code: Cytochrome P450 monooxygenase pvhE (539 aa).

Residues 15-31 (VAFCSLVILCILFKVLT) traverse the membrane as a helical segment. An N-linked (GlcNAc...) asparagine glycan is attached at N379. Position 473 (C473) interacts with heme.

The protein belongs to the cytochrome P450 family. The cofactor is heme.

It is found in the membrane. Its pathway is secondary metabolite biosynthesis. In terms of biological role, cytochrome P450 monooxygenase; part of the gene cluster that mediates the biosynthesis of varicidin A, an antifungal natural product containing a cis-octahydrodecalin core. The PKS module of pvhA together with the enoylreductase pvhC catalyze the formation of the polyketide unit which is then conjugated to L-isoleucine by the condensation domain of the NRPS module. Activity of the Dieckmann cyclase domain (RED) of pvhA results in release of an acyclic tetramate. The cytochrome P450 monooxygenase pvhE then catalyzes the oxidation of the C21 methyl group to a to carboxylate group. The methyltransferase pvhD then further methylates the pvhE product. The Diels-Alderase pvhB is able to catalyze Diels-Alder cycloaddition using both pvhE and pvhD products as substrates to form the decalin ring, yielding varicidin B and A, respectively. This is Cytochrome P450 monooxygenase pvhE from Talaromyces variabilis (Penicillium variabile).